A 417-amino-acid polypeptide reads, in one-letter code: WD repeat and FYVE domain-containing protein 2 (417 aa).

WD repeat units lie at residues 29 to 68, 119 to 157, 202 to 241, and 245 to 284; these read GHVA…QFWP, CHAG…NKVG, AHTN…GEAY, and GHNG…VETP. Residues 286 to 357 form an FYVE-type zinc finger; that stretch reads WKTSDCCQKC…ICNDCAGRMK (72 aa). Residues C292, C295, C319, C322, C327, C330, C349, and C352 each contribute to the Zn(2+) site. A WD 5 repeat occupies 373-412; sequence EIRTGITAMHLQETLGLLVTSGQNRVVMIWDVRSVCSAPS.

In terms of biological role, plays a role in coelomocyte endocytosis. This chain is WD repeat and FYVE domain-containing protein 2, found in Caenorhabditis briggsae.